We begin with the raw amino-acid sequence, 299 residues long: Acarbose 7(IV)-phosphotransferase (299 aa).

It belongs to the carbohydrate kinase PfkB family.

The catalysed reaction is acarbose + ATP = acarbose 7(IV)-phosphate + ADP + H(+). Functionally, catalyzes the phosphorylation of the alpha-glucosidase inhibitor acarbose. Phosphorylation of acarbose could be a resistance-like self-protection mechanism. This is Acarbose 7(IV)-phosphotransferase from Actinoplanes sp. (strain ATCC 31044 / CBS 674.73 / SE50/110).